We begin with the raw amino-acid sequence, 483 residues long: Glutamyl-tRNA(Gln) amidotransferase subunit A (483 aa).

Catalysis depends on charge relay system residues lysine 76 and serine 151. The active-site Acyl-ester intermediate is serine 175.

It belongs to the amidase family. GatA subfamily. In terms of assembly, heterotrimer of A, B and C subunits.

It catalyses the reaction L-glutamyl-tRNA(Gln) + L-glutamine + ATP + H2O = L-glutaminyl-tRNA(Gln) + L-glutamate + ADP + phosphate + H(+). Its function is as follows. Allows the formation of correctly charged Gln-tRNA(Gln) through the transamidation of misacylated Glu-tRNA(Gln) in organisms which lack glutaminyl-tRNA synthetase. The reaction takes place in the presence of glutamine and ATP through an activated gamma-phospho-Glu-tRNA(Gln). This Nitrosococcus oceani (strain ATCC 19707 / BCRC 17464 / JCM 30415 / NCIMB 11848 / C-107) protein is Glutamyl-tRNA(Gln) amidotransferase subunit A.